A 363-amino-acid polypeptide reads, in one-letter code: Phosphoserine aminotransferase (363 aa).

Arginine 42 provides a ligand contact to L-glutamate. Pyridoxal 5'-phosphate is bound by residues 76–77 (GR), tryptophan 102, threonine 156, aspartate 175, and glutamine 198. Residue lysine 199 is modified to N6-(pyridoxal phosphate)lysine. 240-241 (NT) provides a ligand contact to pyridoxal 5'-phosphate.

It belongs to the class-V pyridoxal-phosphate-dependent aminotransferase family. SerC subfamily. As to quaternary structure, homodimer. Pyridoxal 5'-phosphate serves as cofactor.

It is found in the cytoplasm. It carries out the reaction O-phospho-L-serine + 2-oxoglutarate = 3-phosphooxypyruvate + L-glutamate. The catalysed reaction is 4-(phosphooxy)-L-threonine + 2-oxoglutarate = (R)-3-hydroxy-2-oxo-4-phosphooxybutanoate + L-glutamate. The protein operates within amino-acid biosynthesis; L-serine biosynthesis; L-serine from 3-phospho-D-glycerate: step 2/3. Its pathway is cofactor biosynthesis; pyridoxine 5'-phosphate biosynthesis; pyridoxine 5'-phosphate from D-erythrose 4-phosphate: step 3/5. In terms of biological role, catalyzes the reversible conversion of 3-phosphohydroxypyruvate to phosphoserine and of 3-hydroxy-2-oxo-4-phosphonooxybutanoate to phosphohydroxythreonine. The polypeptide is Phosphoserine aminotransferase (Shewanella baltica (strain OS155 / ATCC BAA-1091)).